The primary structure comprises 329 residues: MAAGKAASKPSLWQNERVRFAVCFCGVFVCYFYYGILQETITRADYTHAGKKEKFRYATTLVFIQCIINAAFARLLIQFFEGSKQDHTRSWLYGLCSLSYLGAMVSSNSALQYVNYPTQVLGKSCKPIPVMILGVTILRKKYPMAKYLCVFLIVGGVALFLYKPNKGSSTSDEHVFGFGEMLLLLSLTLDGLTGVVQDHMRGRFQTGANHMMLNVNMWSTLVLGIAVLWSGEVWEFLAFTDRYPSIIYNILLFGITSALGQTFIFMTVVYFGPLTCSIVTTTRKFFTILGSVLLFGNVISHMQWFGTILVFLGLGLDAKFGKSPKKTTH.

The next 8 helical transmembrane spans lie at 21 to 41 (AVCF…QETI), 60 to 80 (TLVF…IQFF), 91 to 111 (WLYG…NSAL), 142 to 162 (YPMA…LFLY), 175 to 195 (VFGF…LTGV), 220 to 240 (TLVL…LAFT), 250 to 270 (ILLF…TVVY), and 292 to 312 (VLLF…LVFL). Residues 325–329 (KKTTH) carry the Di-lysine motif motif.

Belongs to the nucleotide-sugar transporter family. SLC35B subfamily.

Its subcellular location is the endoplasmic reticulum membrane. Functionally, probable sugar transporter. This chain is Solute carrier family 35 member B1 (slc35b1), found in Danio rerio (Zebrafish).